We begin with the raw amino-acid sequence, 282 residues long: Aquaporin PIP-type (282 aa).

2 helical membrane passes run 39 to 61 (WRAA…ATVI) and 74 to 96 (GLLG…TAGI). An NPA 1 motif is present at residues 102 to 104 (NPA). Transmembrane regions (helical) follow at residues 116 to 138 (SLLR…VGLV), 159 to 181 (GYNK…YTVF), 201 to 223 (LPIG…TGIN), and 243 to 265 (HWIF…QYVL). An NPA 2 motif is present at residues 223–225 (NPA).

This sequence belongs to the MIP/aquaporin (TC 1.A.8) family. PIP (TC 1.A.8.11) subfamily.

The protein localises to the membrane. Functionally, water-specific channel. In Atriplex canescens (Fourwing saltbush), this protein is Aquaporin PIP-type.